An 86-amino-acid chain; its full sequence is High affinity immunoglobulin epsilon receptor subunit gamma (86 aa).

The N-terminal stretch at 1 to 18 (MIPAVVLLLLLLVEQAAA) is a signal peptide. Topologically, residues 19-23 (LGEPQ) are extracellular. The helical transmembrane segment at 24 to 44 (LCYILDAILFLYGIVLTLLYC) threads the bilayer. Over 45 to 86 (RLKIQVRKAAIASYEKSDGVYTGLSTRNQETYETLKHEKPPQ) the chain is Cytoplasmic. The region spanning 54–82 (AIASYEKSDGVYTGLSTRNQETYETLKHE) is the ITAM domain. Phosphotyrosine is present on tyrosine 65. Phosphoserine is present on serine 69. Tyrosine 76 is subject to Phosphotyrosine. Position 78 is a phosphothreonine (threonine 78).

It belongs to the CD3Z/FCER1G family. As to quaternary structure, igE Fc receptor is a tetramer of an alpha chain, a beta chain, and two disulfide linked gamma chains. Associates with FCGR1A; forms a functional signaling complex. The signaling subunit of immunoglobulin gamma (IgG) Fc receptor complex. As a homodimer or a heterodimer of CD247 and FCER1G, associates with the ligand binding subunit FCGR3A to form a functional receptor complex. Associates with CLEC6A. Interacts with CLEC4E. Interacts (via ITAM domain) with SYK (via SH2 domains); activates SYK, enabling integrin-mediated activation of neutrophils and macrophages. Interacts with CSF2RB and recruits SYK in response to IL3 stimulation; this interaction is direct. Interacts with CD300LH; the interaction may be indirect. Interacts with CD300LD. Interacts with TARM1.

It is found in the cell membrane. Adapter protein containing an immunoreceptor tyrosine-based activation motif (ITAM) that transduces activation signals from various immunoreceptors. As a component of the high-affinity immunoglobulin E (IgE) receptor, mediates allergic inflammatory signaling in mast cells. As a constitutive component of interleukin-3 receptor complex, selectively mediates interleukin 4/IL4 production by basophils priming T-cells toward effector T-helper 2 subset. Associates with pattern recognition receptors CLEC4D and CLEC4E to form a functional signaling complex in myeloid cells. Binding of mycobacterial trehalose 6,6'-dimycolate (TDM) to this receptor complex leads to phosphorylation of ITAM, triggering activation of SYK, CARD9 and NF-kappa-B, consequently driving maturation of antigen-presenting cells and shaping antigen-specific priming of T-cells toward effector T-helper 1 and T-helper 17 cell subtypes. May function cooperatively with other activating receptors. Functionally linked to integrin beta-2/ITGB2-mediated neutrophil activation. Also involved in integrin alpha-2/ITGA2-mediated platelet activation. This Macaca fascicularis (Crab-eating macaque) protein is High affinity immunoglobulin epsilon receptor subunit gamma (FCER1G).